Here is a 92-residue protein sequence, read N- to C-terminus: Putative membrane protein insertion efficiency factor (92 aa).

The protein belongs to the UPF0161 family.

The protein resides in the cell inner membrane. Functionally, could be involved in insertion of integral membrane proteins into the membrane. In Synechococcus sp. (strain CC9902), this protein is Putative membrane protein insertion efficiency factor.